The sequence spans 372 residues: 3-dehydroquinate synthase (372 aa).

NAD(+) contacts are provided by residues 116–120 (GVVGD), 140–141 (TT), Lys153, Lys162, and 180–183 (TLNT). Residues Glu195, His260, and His277 each contribute to the Zn(2+) site.

Belongs to the sugar phosphate cyclases superfamily. Dehydroquinate synthase family. It depends on Co(2+) as a cofactor. Zn(2+) is required as a cofactor. NAD(+) serves as cofactor.

The protein resides in the cytoplasm. The catalysed reaction is 7-phospho-2-dehydro-3-deoxy-D-arabino-heptonate = 3-dehydroquinate + phosphate. It participates in metabolic intermediate biosynthesis; chorismate biosynthesis; chorismate from D-erythrose 4-phosphate and phosphoenolpyruvate: step 2/7. Catalyzes the conversion of 3-deoxy-D-arabino-heptulosonate 7-phosphate (DAHP) to dehydroquinate (DHQ). The polypeptide is 3-dehydroquinate synthase (Prochlorococcus marinus (strain MIT 9303)).